The sequence spans 744 residues: Glucosamine inositolphosphorylceramide transferase 1 (744 aa).

Helical transmembrane passes span 31–51 (FLVA…WLVV), 378–398 (SLFG…VGFV), and 460–480 (LFFC…VHFL). Residues asparagine 534, 558-563 (NSLNNR), 579-581 (DDD), arginine 609, and 665-669 (FNCED) each bind substrate. Aspartate 581 is a binding site for Mn(2+). An intrachain disulfide couples cysteine 667 to cysteine 718. The active site involves aspartate 669.

Belongs to the glycosyltransferase 64 family. It depends on Mn(2+) as a cofactor.

It localises to the membrane. The protein operates within sphingolipid metabolism. Essential protein. Glycosyltransferase that mediates the glycosylation of glycosylinositol phosphorylceramides (GIPCs), the major sphingolipids in the plasma membrane; acts as a HexN(Ac)-specific GIPC sugar transferase. Responsible for the glycosylation of a subgroup of GIPCs found in seeds and pollen that contain GlcNAc and GlcN (GlcN(Ac)). Maybe involved in the maintenance of cell-cell adhesion. This is Glucosamine inositolphosphorylceramide transferase 1 from Oryza sativa subsp. indica (Rice).